We begin with the raw amino-acid sequence, 603 residues long: Proline--tRNA ligase (603 aa).

This sequence belongs to the class-II aminoacyl-tRNA synthetase family. ProS type 1 subfamily. As to quaternary structure, homodimer.

Its subcellular location is the cytoplasm. It carries out the reaction tRNA(Pro) + L-proline + ATP = L-prolyl-tRNA(Pro) + AMP + diphosphate. Functionally, catalyzes the attachment of proline to tRNA(Pro) in a two-step reaction: proline is first activated by ATP to form Pro-AMP and then transferred to the acceptor end of tRNA(Pro). As ProRS can inadvertently accommodate and process non-cognate amino acids such as alanine and cysteine, to avoid such errors it has two additional distinct editing activities against alanine. One activity is designated as 'pretransfer' editing and involves the tRNA(Pro)-independent hydrolysis of activated Ala-AMP. The other activity is designated 'posttransfer' editing and involves deacylation of mischarged Ala-tRNA(Pro). The misacylated Cys-tRNA(Pro) is not edited by ProRS. The protein is Proline--tRNA ligase of Synechocystis sp. (strain ATCC 27184 / PCC 6803 / Kazusa).